The chain runs to 373 residues: Anhydro-N-acetylmuramic acid kinase (373 aa).

Glycine 12–aspartate 19 provides a ligand contact to ATP.

It belongs to the anhydro-N-acetylmuramic acid kinase family.

It catalyses the reaction 1,6-anhydro-N-acetyl-beta-muramate + ATP + H2O = N-acetyl-D-muramate 6-phosphate + ADP + H(+). It participates in amino-sugar metabolism; 1,6-anhydro-N-acetylmuramate degradation. Its pathway is cell wall biogenesis; peptidoglycan recycling. Its function is as follows. Catalyzes the specific phosphorylation of 1,6-anhydro-N-acetylmuramic acid (anhMurNAc) with the simultaneous cleavage of the 1,6-anhydro ring, generating MurNAc-6-P. Is required for the utilization of anhMurNAc either imported from the medium or derived from its own cell wall murein, and thus plays a role in cell wall recycling. This is Anhydro-N-acetylmuramic acid kinase from Salmonella paratyphi A (strain ATCC 9150 / SARB42).